Consider the following 256-residue polypeptide: Homeobox protein goosecoid (256 aa).

The homeobox DNA-binding region spans 160–219; sequence KRRHRTIFTDEQLEALENLFQETKYPDVGTREQLARKVHLREEKVEVWFKNRRAKWRRQK. The tract at residues 213–256 is disordered; that stretch reads AKWRRQKRSSSEESENAEKWNKTSSKASPEKREEEGKSDLDSDS. The segment covering 240–256 has biased composition (basic and acidic residues); it reads SPEKREEEGKSDLDSDS.

Belongs to the paired homeobox family. Bicoid subfamily. As to expression, in early gastrulation, expressed in the dorsal lip. In later stages of development found in head, limbs and body wall. In the embryo, expressed in the postotic cranial neural crest cells, the frontonasal prominence, the first branchial arch and cleft, and specific regions of large joints.

It is found in the nucleus. Its function is as follows. Regulates chordin (CHRD). May play a role in spatial programing within discrete embryonic fields or lineage compartments during organogenesis. In concert with NKX3-2, plays a role in defining the structural components of the middle ear; required for the development of the entire tympanic ring. Goosecoid-expressing regions of the gastrulating mouse egg cylinder have organizer-like activity when transplanted into Xenopus embryos. Probably involved in the regulatory networks that define neural crest cell fate specification and determine mesoderm cell lineages in mammals. This Mus musculus (Mouse) protein is Homeobox protein goosecoid (Gsc).